The chain runs to 1370 residues: DNA-directed RNA polymerase subunit beta (1370 aa).

This sequence belongs to the RNA polymerase beta chain family. The RNAP catalytic core consists of 2 alpha, 1 beta, 1 beta' and 1 omega subunit. When a sigma factor is associated with the core the holoenzyme is formed, which can initiate transcription.

It catalyses the reaction RNA(n) + a ribonucleoside 5'-triphosphate = RNA(n+1) + diphosphate. Functionally, DNA-dependent RNA polymerase catalyzes the transcription of DNA into RNA using the four ribonucleoside triphosphates as substrates. This chain is DNA-directed RNA polymerase subunit beta, found in Geobacter metallireducens (strain ATCC 53774 / DSM 7210 / GS-15).